A 406-amino-acid polypeptide reads, in one-letter code: L-cysteine:1D-myo-inositol 2-amino-2-deoxy-alpha-D-glucopyranoside ligase (406 aa).

Residue Cys45 participates in Zn(2+) binding. Residues 45 to 48 (CGIT), Thr60, and 83 to 85 (NIT) contribute to the L-cysteinyl-5'-AMP site. Positions 47-57 (ITPYDATHMGH) match the 'HIGH' region motif. The 'ERGGDP' region signature appears at 185 to 190 (ERGGDP). Trp225 contacts L-cysteinyl-5'-AMP. Residue Cys229 participates in Zn(2+) binding. 247–249 (GSD) provides a ligand contact to L-cysteinyl-5'-AMP. His254 serves as a coordination point for Zn(2+). Val281 is an L-cysteinyl-5'-AMP binding site. The short motif at 287 to 291 (KMSKS) is the 'KMSKS' region element.

The protein belongs to the class-I aminoacyl-tRNA synthetase family. MshC subfamily. Monomer. Zn(2+) is required as a cofactor.

It catalyses the reaction 1D-myo-inositol 2-amino-2-deoxy-alpha-D-glucopyranoside + L-cysteine + ATP = 1D-myo-inositol 2-(L-cysteinylamino)-2-deoxy-alpha-D-glucopyranoside + AMP + diphosphate + H(+). Catalyzes the ATP-dependent condensation of GlcN-Ins and L-cysteine to form L-Cys-GlcN-Ins. This chain is L-cysteine:1D-myo-inositol 2-amino-2-deoxy-alpha-D-glucopyranoside ligase, found in Kribbella flavida (strain DSM 17836 / JCM 10339 / NBRC 14399).